A 478-amino-acid chain; its full sequence is 9-divinyl ether synthase (478 aa).

Residue cysteine 431 participates in heme binding.

The protein belongs to the cytochrome P450 family. 9-divinyl ether synthase subfamily.

It carries out the reaction (9S)-hydroperoxy-(10E,12Z)-octadecadienoate = colneleate + H2O. In terms of biological role, involved in the biosynthesis of the anti-fungal toxins colneleic acid and colnelenic acid. The sequence is that of 9-divinyl ether synthase (DES) from Capsicum annuum (Capsicum pepper).